The following is a 210-amino-acid chain: Calaxin (210 aa).

3 EF-hand domains span residues 64-99, 100-135, and 145-180; these read TDDM…FLRG, TLDE…SLIR, and GIKD…ENLL. Asp77, Asp79, Asp81, Tyr83, Glu88, Asp113, Asn115, Asp117, Tyr119, Glu124, Asp158, Asp160, Asp162, Arg164, and Asp169 together coordinate Ca(2+).

Component of the outer dynein arm-docking complex along with ODAD1, ODAD2, ODAD3 and ODAD4.

It localises to the cytoplasm. It is found in the cytoskeleton. The protein localises to the cilium axoneme. Its subcellular location is the cell projection. The protein resides in the cilium. It localises to the flagellum. Functionally, component of the outer dynein arm-docking complex (ODA-DC) that mediates outer dynein arms (ODA) binding onto the doublet microtubule. Seems to regulate the assembly of both ODAs and their axonemal docking complex onto ciliary microtubules. Regulates ciliary and flagellar motility and is required for cilia-driven determination of body laterality. Its function is as follows. Regulates ciliary motility and is required for cilia-driven determination of body laterality. The protein is Calaxin (clxn) of Danio rerio (Zebrafish).